A 179-amino-acid chain; its full sequence is Large ribosomal subunit protein uL6 (179 aa).

Belongs to the universal ribosomal protein uL6 family. In terms of assembly, part of the 50S ribosomal subunit.

Functionally, this protein binds to the 23S rRNA, and is important in its secondary structure. It is located near the subunit interface in the base of the L7/L12 stalk, and near the tRNA binding site of the peptidyltransferase center. The chain is Large ribosomal subunit protein uL6 from Gemmatimonas aurantiaca (strain DSM 14586 / JCM 11422 / NBRC 100505 / T-27).